The chain runs to 78 residues: Large ribosomal subunit protein bL28 (78 aa).

This sequence belongs to the bacterial ribosomal protein bL28 family.

The sequence is that of Large ribosomal subunit protein bL28 from Acinetobacter baylyi (strain ATCC 33305 / BD413 / ADP1).